Consider the following 138-residue polypeptide: Large ribosomal subunit protein uL16 (138 aa).

Residues 1-22 (MQQPARTKYRKQQKGRNKGIAT) are disordered. Positions 7–17 (TKYRKQQKGRN) are enriched in basic residues.

This sequence belongs to the universal ribosomal protein uL16 family. In terms of assembly, part of the 50S ribosomal subunit.

Functionally, binds 23S rRNA and is also seen to make contacts with the A and possibly P site tRNAs. The polypeptide is Large ribosomal subunit protein uL16 (Nitrosospira multiformis (strain ATCC 25196 / NCIMB 11849 / C 71)).